The primary structure comprises 58 residues: Glutathione reductase (58 aa).

FAD-binding residues include Glu5, Thr12, Cys13, and Lys21. Cys13 and Cys18 are oxidised to a cystine.

The protein belongs to the class-I pyridine nucleotide-disulfide oxidoreductase family. Homodimer. FAD serves as cofactor.

It localises to the cytoplasm. It catalyses the reaction 2 glutathione + NADP(+) = glutathione disulfide + NADPH + H(+). Catalyzes the reduction of glutathione disulfide (GSSG) to reduced glutathione (GSH). Constitutes the major mechanism to maintain a high GSH:GSSG ratio in the cytosol. This Spirulina sp protein is Glutathione reductase.